Here is a 499-residue protein sequence, read N- to C-terminus: MKTCLIFFLYTTILQYYFHFSVSSLSTPLLLHLSHSLSTSKHSSSPLHLLKSSSSRSSARFRRHHHKQQQQQLSLPISSGSDYLISLSVGSSSSAVSLYLDTGSDLVWFPCRPFTCILCESKPLPPSPPSSLSSSATTVSCSSPSCSAAHSSLPSSDLCAISNCPLDFIETGDCNTSSYPCPPFYYAYGDGSLVAKLYSDSLSLPSVSVSNFTFGCAHTTLAEPIGVAGFGRGRLSLPAQLAVHSPHLGNSFSYCLVSHSFDSDRVRRPSPLILGRFVDKKEKRVGTTDDHDDGDDEKKKKNEFVFTEMLENPKHPYFYSVSLQGISIGKRNIPAPAMLRRIDKNGGGGVVVDSGTTFTMLPAKFYNSVVEEFDSRVGRVHERADRVEPSSGMSPCYYLNQTVKVPALVLHFAGNRSSVTLPRRNYFYEFMDGGDGKEEKRKIGCLMLMNGGDESELRGGTGAILGNYQQQGFEVVYDLLNRRVGFAKRKCASLWDSLK.

An N-terminal signal peptide occupies residues 1–26 (MKTCLIFFLYTTILQYYFHFSVSSLS). A Peptidase A1 domain is found at 83–487 (YLISLSVGSS…DLLNRRVGFA (405 aa)). Aspartate 101 is an active-site residue. A disulfide bridge connects residues cysteine 111 and cysteine 119. N-linked (GlcNAc...) asparagine glycans are attached at residues asparagine 175 and asparagine 211. Residue aspartate 353 is part of the active site. An intrachain disulfide couples cysteine 396 to cysteine 445. 2 N-linked (GlcNAc...) asparagine glycosylation sites follow: asparagine 400 and asparagine 415.

This sequence belongs to the peptidase A1 family.

This Arabidopsis thaliana (Mouse-ear cress) protein is Probable aspartyl protease At4g16563.